Here is a 120-residue protein sequence, read N- to C-terminus: Dynein 11 kDa light chain, flagellar outer arm (120 aa).

Belongs to the dynein light chain family. Consists of at least 3 heavy chains (alpha, beta and gamma), 2 intermediate chains and 8 light chains.

It localises to the cytoplasm. It is found in the cytoskeleton. Its subcellular location is the flagellum axoneme. The sequence is that of Dynein 11 kDa light chain, flagellar outer arm from Chlamydomonas reinhardtii (Chlamydomonas smithii).